Reading from the N-terminus, the 464-residue chain is Soluble pyridine nucleotide transhydrogenase (464 aa).

35-44 (EASSQVGGSC) provides a ligand contact to FAD.

Belongs to the class-I pyridine nucleotide-disulfide oxidoreductase family. Requires FAD as cofactor.

It localises to the cytoplasm. It carries out the reaction NAD(+) + NADPH = NADH + NADP(+). Conversion of NADPH, generated by peripheral catabolic pathways, to NADH, which can enter the respiratory chain for energy generation. In Marinomonas sp. (strain MWYL1), this protein is Soluble pyridine nucleotide transhydrogenase.